Here is a 565-residue protein sequence, read N- to C-terminus: Transmembrane 7 superfamily member 3 (565 aa).

An N-terminal signal peptide occupies residues 1-21 (MWRLRLLVLAVLAAGSAEAQA). 4 N-linked (GlcNAc...) asparagine glycosylation sites follow: Asn22, Asn56, Asn70, and Asn259. The next 7 membrane-spanning stretches (helical) occupy residues 287–307 (VSTK…CFFG), 315–335 (LFFV…TRLT), 341–361 (VRLA…VASW), 364–384 (FGIL…LVSS), 402–422 (VFWV…MGCL), 427–447 (ILAC…SYMF), and 478–498 (NDYI…TLQI).

The protein resides in the cell membrane. Its function is as follows. Involved in the inhibition of cytokine-induced death of pancreatic beta cells. Involved in the promotion of insulin secretion from pancreatic beta cells. Is a downstream transcriptional target of p53/TP53, and acts as a pro-survival homeostatic factor that attenuates the development of cellular stress. Maintains protein homeostasis and promotes cell survival through attenuation of endoplasmic reticulum (ER) stress and the subsequent induction of unfolded protein response (UPR). This Mus musculus (Mouse) protein is Transmembrane 7 superfamily member 3 (Tm7sf3).